We begin with the raw amino-acid sequence, 187 residues long: UPF0301 protein YqgE (187 aa).

This sequence belongs to the UPF0301 (AlgH) family.

This Escherichia coli O7:K1 (strain IAI39 / ExPEC) protein is UPF0301 protein YqgE.